A 985-amino-acid polypeptide reads, in one-letter code: Ephrin type-A receptor 4-B (985 aa).

The N-terminal stretch at 1 to 20 (MAGIVHGILFCGLFGLCWAV) is a signal peptide. The Extracellular portion of the chain corresponds to 21 to 547 (TGSRIYPASE…MIGEGTSPTV (527 aa)). The region spanning 30–209 (EVTLLDSRSV…FYKKCPLTVR (180 aa)) is the Eph LBD domain. Fibronectin type-III domains follow at residues 328–438 (PPSA…TNQA) and 439–536 (APST…TVPS). Residues N340 and N407 are each glycosylated (N-linked (GlcNAc...) asparagine). The helical transmembrane segment at 548 to 569 (LLVSVAGSIVLVVILIAAFVIS) threads the bilayer. The Cytoplasmic portion of the chain corresponds to 570-985 (RRRSKYSKAK…QQMQGRMVPV (416 aa)). 2 positions are modified to phosphotyrosine; by autocatalysis: Y595 and Y601. In terms of domain architecture, Protein kinase spans 620 to 881 (IKIEKVIGVG…QIVSMLDKLI (262 aa)). ATP-binding positions include 626–634 (IGVGEFGEV) and K652. Residue D745 is the Proton acceptor of the active site. Y778 and Y927 each carry phosphotyrosine; by autocatalysis. Residues 910-974 (SQVASVLDWL…LSSVQGMRTQ (65 aa)) enclose the SAM domain. A PDZ-binding motif is present at residues 983–985 (VPV).

It belongs to the protein kinase superfamily. Tyr protein kinase family. Ephrin receptor subfamily. Localized expression in a subset of neural crest and neural tissues in embryos.

Its subcellular location is the cell membrane. It is found in the early endosome. It carries out the reaction L-tyrosyl-[protein] + ATP = O-phospho-L-tyrosyl-[protein] + ADP + H(+). Its function is as follows. Receptor tyrosine kinase which binds membrane-bound ephrin family ligands residing on adjacent cells, leading to contact-dependent bidirectional signaling into neighboring cells. The signaling pathway downstream of the receptor is referred to as forward signaling while the signaling pathway downstream of the ephrin ligand is referred to as reverse signaling. Highly promiscuous, it has the unique property among Eph receptors to bind and to be physiologically activated by both GPI-anchored ephrin-A and transmembrane ephrin-B ligands including EFNA1 and EFNB3. Upon activation by ephrin ligands, modulates cell morphology and integrin-dependent cell adhesion through regulation of the Rac, Rap and Rho GTPases activity. Plays an important role in the development of the nervous system controlling different steps of axonal guidance including the establishment of the corticospinal projections. This Xenopus laevis (African clawed frog) protein is Ephrin type-A receptor 4-B (epha4-b).